The primary structure comprises 1085 residues: Solute carrier family 12 member 4 (1085 aa).

The Cytoplasmic portion of the chain corresponds to 1–119 (MPHFTVVPVD…RRAAEAPSMG (119 aa)). Serine 24, serine 47, serine 51, serine 81, and serine 88 each carry phosphoserine. A discontinuously helical membrane pass occupies residues 120-141 (TLMGVYLPCLQNIFGVILFLRL). K(+) is bound by residues asparagine 131 and isoleucine 132. The Extracellular portion of the chain corresponds to 142-149 (TWMVGTAG). A helical membrane pass occupies residues 150–172 (VLQALLIVLICCCCTLLTAISMS). At 173–196 (AIATNGVVPAGGSYFMISRSLGPE) the chain is on the cytoplasmic side. The chain crosses the membrane as a helical span at residues 197–225 (FGGAVGLCFYLGTTFAAAMYILGAIEILL). Tyrosine 216 lines the K(+) pocket. Over 226–248 (TYIAPPAAIFYPSGAHDTSNATL) the chain is Extracellular. A glycan (N-linked (GlcNAc...) asparagine) is linked at asparagine 245. The next 2 helical transmembrane spans lie at 249–271 (NNMR…VGVK) and 272–297 (YVNK…GGIK). The Extracellular portion of the chain corresponds to 298–419 (SIFDPPVFPV…LYVVADIATS (122 aa)). Cysteine 308 and cysteine 323 are disulfide-bonded. Asparagine 312, asparagine 331, asparagine 347, and asparagine 361 each carry an N-linked (GlcNAc...) asparagine glycan. Cysteine 343 and cysteine 353 are disulfide-bonded. A helical membrane pass occupies residues 420–440 (FTVLVGIFFPSVTGIMAGSNR). K(+)-binding residues include proline 429 and threonine 432. Glycine 433, isoleucine 434, and methionine 435 together coordinate chloride. Topologically, residues 441-450 (SGDLRDAQKS) are cytoplasmic. A helical transmembrane segment spans residues 451–473 (IPVGTILAIITTSLVYFSSVVLF). Residues 474-504 (GACIEGVVLRDKYGDGVSRNLVVGTLAWPSP) lie on the Extracellular side of the membrane. A helical transmembrane segment spans residues 505–531 (WVIVIGSFFSTCGAGLQSLTGAPRLLQ). Topologically, residues 532-554 (AIAKDNIIPFLRVFGHGKVNGEP) are cytoplasmic. 2 helical membrane-spanning segments follow: residues 555–575 (TWAL…ASLD) and 576–598 (MVAP…ACAV). Residue tyrosine 589 coordinates chloride. Topologically, residues 599–612 (QTLLRTPNWRPRFK) are cytoplasmic. A run of 2 helical transmembrane segments spans residues 613 to 635 (YYHW…VSSW) and 636 to 651 (YYAL…IYKY). Over 652-1085 (IEYQGAEKEW…GGREVITIYS (434 aa)) the chain is Cytoplasmic. Residues 665 to 681 (IRGLSLSAARYALLRLE) are scissor helix. Residues leucine 697, lysine 699, lysine 707, tyrosine 708, and valine 730 each coordinate ATP. Serine 734 bears the Phosphoserine mark. Residues glycine 794, tryptophan 795, and tyrosine 797 each coordinate ATP. 2 positions are modified to phosphoserine: serine 916 and serine 967. Threonine 983 is subject to Phosphothreonine. At serine 1050 the chain carries Phosphoserine.

Belongs to the SLC12A transporter family. K/Cl co-transporter subfamily. As to quaternary structure, homodimer; adopts a domain-swap conformation at the scissor helices connecting the transmembrane domain and C-terminal domain. Heterodimer with other K-Cl cotransporters. Post-translationally, phosphorylated, phosphorylation may regulate transporter activity. As to expression, ubiquitous. Levels are much higher in erythrocytes from patients with Hb SC and Hb SS compared to normal AA erythrocytes. This may contribute to red blood cell dehydration and to the manifestation of sickle cell disease by increasing the intracellular concentration of HbS. In terms of tissue distribution, not detected in circulating reticulocytes.

It localises to the cell membrane. The catalysed reaction is K(+)(in) + chloride(in) = K(+)(out) + chloride(out). With respect to regulation, inhibited by WNK3. Functionally, mediates electroneutral potassium-chloride cotransport when activated by cell swelling. May contribute to cell volume homeostasis in single cells. May be involved in the regulation of basolateral Cl(-) exit in NaCl absorbing epithelia. No transporter activity. This Homo sapiens (Human) protein is Solute carrier family 12 member 4.